The chain runs to 361 residues: Mitogen-activated protein kinase 14B (361 aa).

One can recognise a Protein kinase domain in the interval 25–309 (YQNLSPVGSG…ASQALAHPYF (285 aa)). ATP contacts are provided by residues 31–39 (VGSGAYGSV) and K54. D151 functions as the Proton acceptor in the catalytic mechanism. T181 carries the phosphothreonine; by MAP2K6 modification. Residues 181–183 (TGY) carry the TXY motif. Y183 is modified (phosphotyrosine; by MAP2K6).

Belongs to the protein kinase superfamily. CMGC Ser/Thr protein kinase family. MAP kinase subfamily. Mg(2+) serves as cofactor. Dually phosphorylated on Thr-181 and Tyr-183, which activates the enzyme. As to expression, predominantly expressed in the ovary. Lower levels present in brain, gill, heart, spleen, kidney, muscle and gut.

It localises to the cytoplasm. The protein resides in the nucleus. The enzyme catalyses L-seryl-[protein] + ATP = O-phospho-L-seryl-[protein] + ADP + H(+). It carries out the reaction L-threonyl-[protein] + ATP = O-phospho-L-threonyl-[protein] + ADP + H(+). Its activity is regulated as follows. Activated by threonine and tyrosine phosphorylation by the dual specificity kinase, MKK6. Its function is as follows. Serine/threonine kinase which acts as an essential component of the MAP kinase signal transduction pathway. Mapk14b is one of the four p38 MAPKs which play an important role in the cascades of cellular responses evoked by extracellular stimuli such as pro-inflammatory cytokines or physical stress leading to direct activation of transcription factors. Accordingly, p38 MAPKs phosphorylate a broad range of proteins and it has been estimated that they may have approximately 200 to 300 substrates each. Some of the targets are downstream kinases which are activated through phosphorylation and further phosphorylate additional targets. The chain is Mitogen-activated protein kinase 14B (mapk14b) from Cyprinus carpio (Common carp).